The following is a 221-amino-acid chain: Small ribosomal subunit protein uS3 (221 aa).

The KH type-2 domain occupies 39-107; that stretch reads IRNYIKEKLY…TVILNIIEVK (69 aa).

Belongs to the universal ribosomal protein uS3 family. Part of the 30S ribosomal subunit. Forms a tight complex with proteins S10 and S14.

In terms of biological role, binds the lower part of the 30S subunit head. Binds mRNA in the 70S ribosome, positioning it for translation. The sequence is that of Small ribosomal subunit protein uS3 from Caldanaerobacter subterraneus subsp. tengcongensis (strain DSM 15242 / JCM 11007 / NBRC 100824 / MB4) (Thermoanaerobacter tengcongensis).